Consider the following 38-residue polypeptide: Plastocyanin (38 aa).

Residues 1-38 (AQTVEVKMGADGGLLVFEPAKAGPHNVVFDEDNIPPGV) form the Plastocyanin-like domain. Residue H25 coordinates Cu cation.

It belongs to the plastocyanin family. It depends on Cu(2+) as a cofactor.

The protein localises to the plastid. The protein resides in the chloroplast thylakoid membrane. Its function is as follows. Participates in electron transfer between P700 and the cytochrome b6-f complex in photosystem I. The polypeptide is Plastocyanin (PETE) (Thalassiosira oceanica (Marine diatom)).